The following is a 371-amino-acid chain: 4-hydroxy-3-methylbut-2-en-1-yl diphosphate synthase (flavodoxin) (371 aa).

[4Fe-4S] cluster contacts are provided by Cys-271, Cys-274, Cys-306, and Glu-313.

The protein belongs to the IspG family. Requires [4Fe-4S] cluster as cofactor.

The catalysed reaction is (2E)-4-hydroxy-3-methylbut-2-enyl diphosphate + oxidized [flavodoxin] + H2O + 2 H(+) = 2-C-methyl-D-erythritol 2,4-cyclic diphosphate + reduced [flavodoxin]. Its pathway is isoprenoid biosynthesis; isopentenyl diphosphate biosynthesis via DXP pathway; isopentenyl diphosphate from 1-deoxy-D-xylulose 5-phosphate: step 5/6. In terms of biological role, converts 2C-methyl-D-erythritol 2,4-cyclodiphosphate (ME-2,4cPP) into 1-hydroxy-2-methyl-2-(E)-butenyl 4-diphosphate. This Actinobacillus succinogenes (strain ATCC 55618 / DSM 22257 / CCUG 43843 / 130Z) protein is 4-hydroxy-3-methylbut-2-en-1-yl diphosphate synthase (flavodoxin).